A 105-amino-acid polypeptide reads, in one-letter code: UPF0145 protein GK1405 (105 aa).

The protein belongs to the UPF0145 family.

The sequence is that of UPF0145 protein GK1405 from Geobacillus kaustophilus (strain HTA426).